The chain runs to 155 residues: Ribosome maturation factor RimP (155 aa).

This sequence belongs to the RimP family.

It localises to the cytoplasm. Its function is as follows. Required for maturation of 30S ribosomal subunits. This Bacteroides thetaiotaomicron (strain ATCC 29148 / DSM 2079 / JCM 5827 / CCUG 10774 / NCTC 10582 / VPI-5482 / E50) protein is Ribosome maturation factor RimP.